The following is a 23-amino-acid chain: Superoxide dismutase [Mn], mitochondrial (23 aa).

It belongs to the iron/manganese superoxide dismutase family. In terms of assembly, homotetramer. It depends on Mn(2+) as a cofactor.

The protein resides in the mitochondrion matrix. It carries out the reaction 2 superoxide + 2 H(+) = H2O2 + O2. Destroys superoxide anion radicals which are normally produced within the cells and which are toxic to biological systems. The sequence is that of Superoxide dismutase [Mn], mitochondrial from Aquarana catesbeiana (American bullfrog).